The sequence spans 501 residues: Raftlin-2 (501 aa).

Disordered stretches follow at residues 1-20 and 196-238; these read MGCG…GKIF and SWNE…SRKG. Gly2 carries the N-myristoyl glycine lipid modification. Cys3 carries S-palmitoyl cysteine lipidation. Residues 224 to 233 are compositionally biased toward polar residues; it reads MEQNGSPSSS. Ser405 is modified (phosphoserine). A disordered region spans residues 407–454; it reads AQTTDKKASRRIKGEDKNKATSRSIGLDTTTPQPAESRHPPEECRLSP. Thr409 bears the Phosphothreonine mark. Basic and acidic residues predominate over residues 410–425; that stretch reads TDKKASRRIKGEDKNK. A compositionally biased stretch (polar residues) spans 427-440; that stretch reads TSRSIGLDTTTPQP. Ser430 is modified (phosphoserine). Residues 442–451 show a composition bias toward basic and acidic residues; the sequence is ESRHPPEECR.

Belongs to the raftlin family.

The protein localises to the cell membrane. In terms of biological role, upon bacterial lipopolysaccharide stimulation, mediates clathrin-dependent internalization of TLR4 in dendritic cells, resulting in activation of TICAM1-mediated signaling and subsequent IFNB1 production. May regulate B-cell antigen receptor mediated-signaling. This Pongo abelii (Sumatran orangutan) protein is Raftlin-2 (RFTN2).